Consider the following 360-residue polypeptide: Geranylgeranyl pyrophosphate synthase 12, chloroplastic (360 aa).

The transit peptide at 1 to 39 (MANTVHLSSSSLFIQTRGRKYNSILSFNNLQKRTVLSLS) directs the protein to the chloroplast. Residues Lys106, Arg109, and His138 each contribute to the isopentenyl diphosphate site. Mg(2+) is bound by residues Asp145 and Asp151. Residue Arg156 coordinates dimethylallyl diphosphate. An isopentenyl diphosphate-binding site is contributed by Arg157. Dimethylallyl diphosphate is bound by residues Lys245, Thr246, Gln283, Lys300, and Lys310.

This sequence belongs to the FPP/GGPP synthase family. As to quaternary structure, monomer. Requires Mg(2+) as cofactor.

The protein localises to the plastid. It is found in the chloroplast. The enzyme catalyses isopentenyl diphosphate + dimethylallyl diphosphate = (2E)-geranyl diphosphate + diphosphate. The catalysed reaction is isopentenyl diphosphate + (2E)-geranyl diphosphate = (2E,6E)-farnesyl diphosphate + diphosphate. It catalyses the reaction isopentenyl diphosphate + (2E,6E)-farnesyl diphosphate = (2E,6E,10E)-geranylgeranyl diphosphate + diphosphate. It functions in the pathway isoprenoid biosynthesis; farnesyl diphosphate biosynthesis; farnesyl diphosphate from geranyl diphosphate and isopentenyl diphosphate: step 1/1. The protein operates within isoprenoid biosynthesis; geranyl diphosphate biosynthesis; geranyl diphosphate from dimethylallyl diphosphate and isopentenyl diphosphate: step 1/1. Its pathway is isoprenoid biosynthesis; geranylgeranyl diphosphate biosynthesis; geranylgeranyl diphosphate from farnesyl diphosphate and isopentenyl diphosphate: step 1/1. Catalyzes the trans-addition of the three molecules of IPP onto DMAPP to form geranylgeranyl pyrophosphate. This is Geranylgeranyl pyrophosphate synthase 12, chloroplastic from Arabidopsis thaliana (Mouse-ear cress).